Consider the following 149-residue polypeptide: Cyanate hydratase (149 aa).

Catalysis depends on residues arginine 90, glutamate 93, and serine 116.

The protein belongs to the cyanase family.

The enzyme catalyses cyanate + hydrogencarbonate + 3 H(+) = NH4(+) + 2 CO2. Catalyzes the reaction of cyanate with bicarbonate to produce ammonia and carbon dioxide. In Synechocystis sp. (strain ATCC 27184 / PCC 6803 / Kazusa), this protein is Cyanate hydratase.